The chain runs to 159 residues: NADH-quinone oxidoreductase subunit B (159 aa).

Residues Cys36, Cys37, Cys102, and Cys132 each coordinate [4Fe-4S] cluster.

The protein belongs to the complex I 20 kDa subunit family. NDH-1 is composed of 14 different subunits. Subunits NuoB, C, D, E, F, and G constitute the peripheral sector of the complex. It depends on [4Fe-4S] cluster as a cofactor.

It is found in the cell inner membrane. The enzyme catalyses a quinone + NADH + 5 H(+)(in) = a quinol + NAD(+) + 4 H(+)(out). In terms of biological role, NDH-1 shuttles electrons from NADH, via FMN and iron-sulfur (Fe-S) centers, to quinones in the respiratory chain. Couples the redox reaction to proton translocation (for every two electrons transferred, four hydrogen ions are translocated across the cytoplasmic membrane), and thus conserves the redox energy in a proton gradient. This chain is NADH-quinone oxidoreductase subunit B, found in Verminephrobacter eiseniae (strain EF01-2).